The sequence spans 274 residues: tRNA-cytidine(32) 2-sulfurtransferase (274 aa).

The PP-loop motif motif lies at 40-45 (SGGKDS). Residues C115, C118, and C206 each coordinate [4Fe-4S] cluster.

Belongs to the TtcA family. Homodimer. Requires Mg(2+) as cofactor. The cofactor is [4Fe-4S] cluster.

It localises to the cytoplasm. It carries out the reaction cytidine(32) in tRNA + S-sulfanyl-L-cysteinyl-[cysteine desulfurase] + AH2 + ATP = 2-thiocytidine(32) in tRNA + L-cysteinyl-[cysteine desulfurase] + A + AMP + diphosphate + H(+). It functions in the pathway tRNA modification. Its function is as follows. Catalyzes the ATP-dependent 2-thiolation of cytidine in position 32 of tRNA, to form 2-thiocytidine (s(2)C32). The sulfur atoms are provided by the cysteine/cysteine desulfurase (IscS) system. This Pseudomonas syringae pv. tomato (strain ATCC BAA-871 / DC3000) protein is tRNA-cytidine(32) 2-sulfurtransferase.